A 309-amino-acid chain; its full sequence is MRKIIVGSRKSKLALTQTNWFIDQLKALGLPYEFEVKEIVTKGDVILDVTLSKVGGKGLFVKEIEHALLTKEIDMAVHSMKDMPAVLPEGLMIGCTPKRVDPRDAFISKNGASFKELAEGAILGTSSLRRSAQLLAARPDLQVKWIRGNIDTRLRKLKEEDYDAIILATAGLQRMGWDNEVITEHLDETLCVPAVGQGALAIECREDDKDLLQLLAHMNDGVTEKTVAAERVFLHKLEGGCQVPIAGYATLTENDAIELTALVGSMDGSVLLKEKVVGTDPEKVGLEAADRLINQGAKELILAANKEQQ.

An S-(dipyrrolylmethanemethyl)cysteine modification is found at C241.

Belongs to the HMBS family. In terms of assembly, monomer. The cofactor is dipyrromethane.

The catalysed reaction is 4 porphobilinogen + H2O = hydroxymethylbilane + 4 NH4(+). Its pathway is porphyrin-containing compound metabolism; protoporphyrin-IX biosynthesis; coproporphyrinogen-III from 5-aminolevulinate: step 2/4. In terms of biological role, tetrapolymerization of the monopyrrole PBG into the hydroxymethylbilane pre-uroporphyrinogen in several discrete steps. The chain is Porphobilinogen deaminase from Bacillus cereus (strain AH187).